A 487-amino-acid chain; its full sequence is Glutamyl-tRNA(Gln) amidotransferase subunit A (487 aa).

Residues Lys-78 and Ser-153 each act as charge relay system in the active site. Catalysis depends on Ser-177, which acts as the Acyl-ester intermediate.

The protein belongs to the amidase family. GatA subfamily. Heterotrimer of A, B and C subunits.

The catalysed reaction is L-glutamyl-tRNA(Gln) + L-glutamine + ATP + H2O = L-glutaminyl-tRNA(Gln) + L-glutamate + ADP + phosphate + H(+). Its function is as follows. Allows the formation of correctly charged Gln-tRNA(Gln) through the transamidation of misacylated Glu-tRNA(Gln) in organisms which lack glutaminyl-tRNA synthetase. The reaction takes place in the presence of glutamine and ATP through an activated gamma-phospho-Glu-tRNA(Gln). The chain is Glutamyl-tRNA(Gln) amidotransferase subunit A from Oleidesulfovibrio alaskensis (strain ATCC BAA-1058 / DSM 17464 / G20) (Desulfovibrio alaskensis).